Reading from the N-terminus, the 888-residue chain is Leukocyte tyrosine kinase receptor (888 aa).

An N-terminal signal peptide occupies residues 1–16 (MGCSHRLLLWLGAAGT). Over 17 to 421 (ILCSNSEFQT…CMDLPTTASP (405 aa)) the chain is Extracellular. 2 disulfides stabilise this stretch: cysteine 73/cysteine 86 and cysteine 168/cysteine 179. Residues 226–294 (LVAAGGGGRS…RSPREGAEGG (69 aa)) are disordered. Residues 260 to 273 (GSGGRGGAAGGGSG) are compositionally biased toward gly residues. Residues cysteine 297 and cysteine 319 are joined by a disulfide bond. Residues asparagine 377 and asparagine 409 are each glycosylated (N-linked (GlcNAc...) asparagine). The helical transmembrane segment at 422-446 (LILMGAVVAALALSLLMMCAVLILV) threads the bilayer. Residues 447–888 (NQKCQGLWGT…SSSSSIPGIQ (442 aa)) are Cytoplasmic-facing. The 277-residue stretch at 506 to 782 (VTLLRALGHG…IQYCTQDPDV (277 aa)) folds into the Protein kinase domain. ATP-binding positions include 512 to 520 (LGHGAFGEV) and lysine 540. The active-site Proton acceptor is aspartate 639. Tyrosine 672 carries the phosphotyrosine; by autocatalysis modification. A disordered region spans residues 857–888 (TYGSWTPRGPQGEDTGIEHCNGSSSSSIPGIQ). The span at 877–888 (NGSSSSSIPGIQ) shows a compositional bias: polar residues.

It belongs to the protein kinase superfamily. Tyr protein kinase family. Insulin receptor subfamily. Homodimer; homodimerizes following ligand-binding. Part of a complex including LTK, TNK2 and GRB2, in which GRB2 promotes LTK recruitment by TNK2. Post-translationally, phosphorylated at tyrosine residues by autocatalysis, which activates kinase activity. As to expression, subsets of lymphoid and neuronal cells.

The protein resides in the cell membrane. The protein localises to the endoplasmic reticulum. It catalyses the reaction L-tyrosyl-[protein] + ATP = O-phospho-L-tyrosyl-[protein] + ADP + H(+). Activated by ligand-binding, leading to homodimerization and autophosphorylation. Its function is as follows. Receptor with a tyrosine-protein kinase activity. Following activation by ALKAL1 or ALKAL2 ligands at the cell surface, transduces an extracellular signal into an intracellular response. Ligand-binding to the extracellular domain induces tyrosine kinase activation, leading to activation of the mitogen-activated protein kinase (MAPK) pathway. Phosphorylates almost exclusively at the first tyrosine of the Y-x-x-x-Y-Y motif. The exact function of this protein is not known; studies with chimeric proteins demonstrate its ability to promote growth and specifically neurite outgrowth, and cell survival. Involved in regulation of the secretory pathway involving endoplasmic reticulum (ER) export sites (ERESs) and ER to Golgi transport. In Mus musculus (Mouse), this protein is Leukocyte tyrosine kinase receptor.